Reading from the N-terminus, the 354-residue chain is Malate dehydrogenase 1, peroxisomal (354 aa).

The tract at residues 6–14 (RIARISAHL) is peroxisomal targeting signal PTS2. NAD(+)-binding positions include 49-55 (GAAGGIG) and Asp-75. Substrate contacts are provided by Arg-122 and Arg-128. Residues Asn-135 and 158–160 (ISN) each bind NAD(+). Positions 160 and 194 each coordinate substrate. His-218 serves as the catalytic Proton acceptor. Met-269 provides a ligand contact to NAD(+).

It belongs to the LDH/MDH superfamily. MDH type 1 family. In terms of assembly, homodimer. Expressed in rosette leaves at low levels.

The protein resides in the peroxisome. The enzyme catalyses (S)-malate + NAD(+) = oxaloacetate + NADH + H(+). In terms of biological role, catalyzes a reversible NAD-dependent dehydrogenase reaction involved in central metabolism and redox homeostasis between organelle compartments. Peroxisomal NAD-dependent malate dehydrogenase involved in fatty acid beta-oxidation. Reoxidizes NADH from the beta-oxidation and provides NAD for the conversion of fatty acyl-CoA to acetyl-CoA. Does not participate directly in the glyoxylate cycle. Required for maintenance of photosynthetic rates under photorespiratory conditions, and carbon flow during photorespiration. Supplies NADH reductant to the peroxisomal hydroxypyruvate reductase (HPR), which reduces hydroxypyruvate into glycerate in the photorespiratory cycle. The sequence is that of Malate dehydrogenase 1, peroxisomal from Arabidopsis thaliana (Mouse-ear cress).